A 224-amino-acid chain; its full sequence is Ribose-5-phosphate isomerase A (224 aa).

Residues 34–37, 87–90, and 100–103 contribute to the substrate site; these read TGST, DGAD, and KGGG. The Proton acceptor role is filled by E109. K127 is a substrate binding site.

This sequence belongs to the ribose 5-phosphate isomerase family. In terms of assembly, homodimer.

It carries out the reaction aldehydo-D-ribose 5-phosphate = D-ribulose 5-phosphate. The protein operates within carbohydrate degradation; pentose phosphate pathway; D-ribose 5-phosphate from D-ribulose 5-phosphate (non-oxidative stage): step 1/1. Functionally, catalyzes the reversible conversion of ribose-5-phosphate to ribulose 5-phosphate. The polypeptide is Ribose-5-phosphate isomerase A (Francisella tularensis subsp. tularensis (strain FSC 198)).